The following is a 264-amino-acid chain: Sororin (264 aa).

The disordered stretch occupies residues 1-45 (MAERRTRSGGAAQRSGPRTSLTKPSKSSKRKSGSDLPNSFSEIWP). A phosphoserine mark is found at S20, S32, S34, S78, and S82. The KEN box signature appears at 87-89 (KEN). T97 carries the post-translational modification Phosphothreonine. Phosphoserine is present on S106. A phosphothreonine mark is found at T110, T114, and T159. The FGF motif motif lies at 166–168 (FGF). Position 222 is a phosphoserine (S222). The C-terminal Sororin domain stretch occupies residues 242 to 264 (LDKWAVAMNAEFEAAEQFELLIE).

Belongs to the sororin family. In terms of assembly, interacts with the APC/C complex. Interacts with the chromatin-bound cohesin complex; the interaction is indirect, occurs after DNA replication and requires acetylation of the cohesin component SMC3. Interacts (via the FGF motif) with PDS5A and PDS5B; the interaction is direct and prevents the interaction of PDS5A with WAPL. Phosphorylated. Phosphorylation, as cells enter mitosis, disrupts the interaction with PDS5A and relieves the inhibition of WAPL by CDCA5. Post-translationally, ubiquitinated by the APC/C complex in G1, leading to its degradation.

The protein localises to the nucleus. It localises to the chromosome. The protein resides in the cytoplasm. Regulator of sister chromatid cohesion in mitosis stabilizing cohesin complex association with chromatin. May antagonize the action of WAPL which stimulates cohesin dissociation from chromatin. Cohesion ensures that chromosome partitioning is accurate in both meiotic and mitotic cells and plays an important role in DNA repair. Required for efficient DNA double-stranded break repair. This is Sororin (Cdca5) from Mus musculus (Mouse).